We begin with the raw amino-acid sequence, 473 residues long: Asparagine--tRNA ligase (473 aa).

It belongs to the class-II aminoacyl-tRNA synthetase family. In terms of assembly, homodimer.

The protein resides in the cytoplasm. The catalysed reaction is tRNA(Asn) + L-asparagine + ATP = L-asparaginyl-tRNA(Asn) + AMP + diphosphate + H(+). This Treponema denticola (strain ATCC 35405 / DSM 14222 / CIP 103919 / JCM 8153 / KCTC 15104) protein is Asparagine--tRNA ligase.